The sequence spans 919 residues: Probable dipeptidyl-aminopeptidase B (919 aa).

Residues Met1 to Pro89 form a disordered region. Residues Met1 to Arg95 are Cytoplasmic-facing. Residues Asp27 to Leu38 are compositionally biased toward low complexity. Residues His44–Gly55 are compositionally biased toward polar residues. The chain crosses the membrane as a helical; Signal-anchor for type II membrane protein span at residues Ile96–Met116. Over Ala117–Gly919 the chain is Vacuolar. Residues Asn121–Ile150 form a disordered region. The span at Ser127 to Ser136 shows a compositional bias: low complexity. 5 N-linked (GlcNAc...) asparagine glycosylation sites follow: Asn207, Asn303, Asn355, Asn577, and Asn665. Residue Ser760 is the Charge relay system of the active site. N-linked (GlcNAc...) asparagine glycosylation is found at Asn814 and Asn819. Active-site charge relay system residues include Asp837 and His870.

Belongs to the peptidase S9B family.

The protein localises to the vacuole membrane. The catalysed reaction is Release of an N-terminal dipeptide, Xaa-Yaa-|-Zaa-, from a polypeptide, preferentially when Yaa is Pro, provided Zaa is neither Pro nor hydroxyproline.. Type IV dipeptidyl-peptidase which removes N-terminal dipeptides sequentially from polypeptides having unsubstituted N-termini provided that the penultimate residue is proline. The chain is Probable dipeptidyl-aminopeptidase B (DAPB) from Arthroderma otae (strain ATCC MYA-4605 / CBS 113480) (Microsporum canis).